We begin with the raw amino-acid sequence, 396 residues long: NADH-quinone oxidoreductase subunit D (396 aa).

Belongs to the complex I 49 kDa subunit family. As to quaternary structure, NDH-1 is composed of 14 different subunits. Subunits NuoB, C, D, E, F, and G constitute the peripheral sector of the complex.

Its subcellular location is the cell inner membrane. It carries out the reaction a quinone + NADH + 5 H(+)(in) = a quinol + NAD(+) + 4 H(+)(out). Its function is as follows. NDH-1 shuttles electrons from NADH, via FMN and iron-sulfur (Fe-S) centers, to quinones in the respiratory chain. The immediate electron acceptor for the enzyme in this species is believed to be ubiquinone. Couples the redox reaction to proton translocation (for every two electrons transferred, four hydrogen ions are translocated across the cytoplasmic membrane), and thus conserves the redox energy in a proton gradient. This chain is NADH-quinone oxidoreductase subunit D, found in Brucella suis biovar 1 (strain 1330).